The chain runs to 431 residues: Glucose-1-phosphate adenylyltransferase (431 aa).

Residue lysine 39 coordinates beta-D-fructose 1,6-bisphosphate. 3 residues coordinate AMP: arginine 40, histidine 46, and arginine 52. Tyrosine 114 is an alpha-D-glucose 1-phosphate binding site. Arginine 130 lines the AMP pocket. Alpha-D-glucose 1-phosphate-binding positions include glycine 179, 194 to 195, and serine 212; that span reads EK. Residues glutamate 370 and arginine 386 each contribute to the AMP site. Residues 419-423 and 429-431 contribute to the beta-D-fructose 1,6-bisphosphate site; these read REMLR and QER.

This sequence belongs to the bacterial/plant glucose-1-phosphate adenylyltransferase family. In terms of assembly, homotetramer.

It catalyses the reaction alpha-D-glucose 1-phosphate + ATP + H(+) = ADP-alpha-D-glucose + diphosphate. Its pathway is glycan biosynthesis; glycogen biosynthesis. With respect to regulation, allosterically activated by fructose-1,6-bisphosphate (F16BP) and inhibited by AMP. In terms of biological role, involved in the biosynthesis of ADP-glucose, a building block required for the elongation reactions to produce glycogen. Catalyzes the reaction between ATP and alpha-D-glucose 1-phosphate (G1P) to produce pyrophosphate and ADP-Glc. The chain is Glucose-1-phosphate adenylyltransferase from Shigella boydii serotype 18 (strain CDC 3083-94 / BS512).